A 352-amino-acid polypeptide reads, in one-letter code: NAD(P)H oxidoreductase RTN4IP1, mitochondrial (352 aa).

Positions 11–348 (ESLDLLEYKT…NSNSNGKIII (338 aa)) constitute an Enoyl reductase (ER) domain. NADPH contacts are provided by V165, Y206, A296, and F298.

This sequence belongs to the zinc-containing alcohol dehydrogenase family. Quinone oxidoreductase subfamily.

It localises to the mitochondrion matrix. The catalysed reaction is a quinone + NADH + H(+) = a quinol + NAD(+). The enzyme catalyses a quinone + NADPH + H(+) = a quinol + NADP(+). It participates in cofactor biosynthesis; ubiquinone biosynthesis. Its function is as follows. NAD(P)H oxidoreductase involved in the ubiquinone biosynthetic pathway. Required for the O-methyltransferase activity of coq3. The chain is NAD(P)H oxidoreductase RTN4IP1, mitochondrial (rtn4ip1) from Dictyostelium discoideum (Social amoeba).